We begin with the raw amino-acid sequence, 309 residues long: Protein FdhE (309 aa).

Belongs to the FdhE family.

It is found in the cytoplasm. In terms of biological role, necessary for formate dehydrogenase activity. The chain is Protein FdhE from Shigella boydii serotype 18 (strain CDC 3083-94 / BS512).